Here is a 607-residue protein sequence, read N- to C-terminus: LRR receptor kinase SERK2 (607 aa).

The signal sequence occupies residues M1–S21. Residues D22–G219 are Extracellular-facing. Residues N36 and N110 are each glycosylated (N-linked (GlcNAc...) asparagine). LRR repeat units follow at residues L87 to N110, L111 to L135, S136 to I159, and S160 to V183. N-linked (GlcNAc...) asparagine glycans are attached at residues N149, N171, N187, and N206. The chain crosses the membrane as a helical span at residues I220 to F240. The Cytoplasmic segment spans residues C241–R607. Residues F284–L563 enclose the Protein kinase domain. ATP contacts are provided by residues L290 to V298 and K312. D411 serves as the catalytic Proton acceptor.

This sequence belongs to the protein kinase superfamily. Ser/Thr protein kinase family.

It localises to the cell membrane. The enzyme catalyses L-seryl-[protein] + ATP = O-phospho-L-seryl-[protein] + ADP + H(+). The catalysed reaction is L-threonyl-[protein] + ATP = O-phospho-L-threonyl-[protein] + ADP + H(+). In terms of biological role, may be involved in the regulation of plant growth through the brassinosteroid (BR) signaling pathway. This chain is LRR receptor kinase SERK2, found in Oryza sativa subsp. japonica (Rice).